A 346-amino-acid chain; its full sequence is MKFSPAHYLLPLLPALVLSTRQDYEELEKQLKEVFKERSTILRQLTKTSRELDGIKVSLQSLKNDEHSAKIDVQKLLELGQKQREEMKSLQEALQNQLKETSEKAEKHQATINFLKTEVERKSKMIRDLQNENKSLKNKLLSGNKLCGIHAEESKKIQAQLKELRYGKKDLLFKAQQLTDLEQKLAVAKNELEKAALDRESQMKAMKETVQLCLTSVFRDQPPPALSLITSNPTQMLLPPRNSASKLPDAAAKSKPQQSASGNNESSQVESTKEGSPSTTACDSQDEGRTCSIKHKESPPSNATAETKPIPQKLQMPPCSECEVKKAPEKPLTSFEGMAAREEKIL.

A signal peptide spans 1-19 (MKFSPAHYLLPLLPALVLS). Residues 16-211 (LVLSTRQDYE…QMKAMKETVQ (196 aa)) adopt a coiled-coil conformation. The N-linked (GlcNAc...) asparagine glycan is linked to Asn-133. The tract at residues 164–192 (LRYGKKDLLFKAQQLTDLEQKLAVAKNEL) is leucine-zipper. The tract at residues 225-346 (ALSLITSNPT…GMAAREEKIL (122 aa)) is disordered. A compositionally biased stretch (low complexity) spans 250–261 (AAAKSKPQQSAS). Residues 262–283 (GNNESSQVESTKEGSPSTTACD) are compositionally biased toward polar residues. The N-linked (GlcNAc...) asparagine glycan is linked to Asn-264. Basic and acidic residues predominate over residues 286 to 298 (DEGRTCSIKHKES). Asn-302 carries N-linked (GlcNAc...) asparagine glycosylation.

Its subcellular location is the secreted. The sequence is that of Leucine zipper protein 2 (LUZP2) from Pongo abelii (Sumatran orangutan).